The sequence spans 729 residues: Elongation factor 2 (729 aa).

Positions 19-262 (EQIRNIAIAA…MVCEHFPNPV (244 aa)) constitute a tr-type G domain. Residues 28–35 (AHVDHGKT), 94–98 (DTPGH), and 148–151 (NKVD) contribute to the GTP site. His597 is subject to Diphthamide.

Belongs to the TRAFAC class translation factor GTPase superfamily. Classic translation factor GTPase family. EF-G/EF-2 subfamily.

It localises to the cytoplasm. Catalyzes the GTP-dependent ribosomal translocation step during translation elongation. During this step, the ribosome changes from the pre-translocational (PRE) to the post-translocational (POST) state as the newly formed A-site-bound peptidyl-tRNA and P-site-bound deacylated tRNA move to the P and E sites, respectively. Catalyzes the coordinated movement of the two tRNA molecules, the mRNA and conformational changes in the ribosome. This chain is Elongation factor 2, found in Natronomonas pharaonis (strain ATCC 35678 / DSM 2160 / CIP 103997 / JCM 8858 / NBRC 14720 / NCIMB 2260 / Gabara) (Halobacterium pharaonis).